A 576-amino-acid chain; its full sequence is Calcium-dependent protein kinase 11 (576 aa).

A lipid anchor (N-myristoyl glycine) is attached at glycine 2. The disordered stretch occupies residues 27 to 88 (PADAAPPALP…ANKAAPKVKR (62 aa)). Over residues 41–56 (APSDQAPEPVTIPPSE) the composition is skewed to low complexity. The 259-residue stretch at 113–371 (YTIGKKLGQG…AHEALCHPWV (259 aa)) folds into the Protein kinase domain. ATP is bound by residues 119–127 (LGQGQFGTT) and lysine 142. Aspartate 237 acts as the Proton acceptor in catalysis. Residues 377-407 (APDKPLDSAVLSRLKQFSAMNKLKKMALRVI) are autoinhibitory domain. EF-hand domains follow at residues 414-449 (EEIAGLKEMFKMLDTDNSGHITLEELKTGLQRVGAN), 450-485 (LMDSEIDALMEAADIDNSGTIDYGEFIAATLHINKV), 486-521 (EKEDKLFAAFSYFDKDGSGYITQDELQKACEEFGIG), and 522-555 (DTRIEDIIGDIDQDNDGRIDYNEFVEMMQKGNNA). 20 residues coordinate Ca(2+): aspartate 427, aspartate 429, serine 431, histidine 433, glutamate 438, aspartate 463, aspartate 465, serine 467, threonine 469, glutamate 474, aspartate 499, aspartate 501, serine 503, tyrosine 505, glutamate 510, aspartate 533, aspartate 535, aspartate 537, arginine 539, and glutamate 544.

It belongs to the protein kinase superfamily. Ser/Thr protein kinase family. CDPK subfamily.

The protein resides in the membrane. The enzyme catalyses L-seryl-[protein] + ATP = O-phospho-L-seryl-[protein] + ADP + H(+). It carries out the reaction L-threonyl-[protein] + ATP = O-phospho-L-threonyl-[protein] + ADP + H(+). With respect to regulation, activated by calcium. Autophosphorylation may play an important role in the regulation of the kinase activity. May play a role in signal transduction pathways that involve calcium as a second messenger. This Oryza sativa subsp. japonica (Rice) protein is Calcium-dependent protein kinase 11.